Reading from the N-terminus, the 608-residue chain is MNKEERAKRQSKIRNFSIIAHIDHGKSTLADRILEKTNALTQREMKAQLLDSMDLERERGITIKLNAVQLTYKAKDGEEYILHLIDTPGHVDFTYEVSRSLAACEGAILVVDAAQGIEAQTLANVYLALDNDLEILPVINKIDLPSADPERVRQEVEDVIGLDASEAVLASAKAGIGIEEILEQIVEKVPAPDGDPEEPLQCMIFDSLYDPYRGVIAYIRVVNGTVKVGDKVRMMATGKEFEVTEVGVFTPKTTQRDELTVGDVGFLAASIKNVGDTRVGDTITHAKRPAAEPLPGYRKLNPMVFCGLYPIDTARYNDLREALEKLQLNDSALEFEPETSQALGFGFRCGFLGLLHMEIIQERIEREFKIDLITTAPSVIYKVYLTNGEEIVVDNPSNMPDPQSIDRVEEPYVKASIMVPNDYVGAVMEICQGKRGTFIDMQYLDETRVTLTYEIPLSEIVYDFFDQLKSNTKGYASFDYELIGYQVSKLVKMDILLNGEQVDALSFIVHRDSAYDRGKVIVEKLKELIPRQQFEVPIQAAIGNKIVARSTIKAMRKNVLAKCYGGDISRKRKLLEKQKEGKKRMKSVGSVEVPQEAFMAVLRMDDDK.

Residues 11-193 form the tr-type G domain; it reads SKIRNFSIIA…QIVEKVPAPD (183 aa). Residues 23-28 and 140-143 each bind GTP; these read DHGKST and NKID.

This sequence belongs to the TRAFAC class translation factor GTPase superfamily. Classic translation factor GTPase family. LepA subfamily.

The protein localises to the cell membrane. It catalyses the reaction GTP + H2O = GDP + phosphate + H(+). Required for accurate and efficient protein synthesis under certain stress conditions. May act as a fidelity factor of the translation reaction, by catalyzing a one-codon backward translocation of tRNAs on improperly translocated ribosomes. Back-translocation proceeds from a post-translocation (POST) complex to a pre-translocation (PRE) complex, thus giving elongation factor G a second chance to translocate the tRNAs correctly. Binds to ribosomes in a GTP-dependent manner. The protein is Elongation factor 4 of Bacillus cytotoxicus (strain DSM 22905 / CIP 110041 / 391-98 / NVH 391-98).